A 972-amino-acid polypeptide reads, in one-letter code: UvrABC system protein A (972 aa).

32–39 provides a ligand contact to ATP; sequence GLSGSGKS. The C4-type; atypical zinc finger occupies 257 to 285; it reads CPNGHALAVDDLEPRSFSFNSPYGACPEC. ABC transporter domains are found at residues 315-601 and 621-950; these read WSNG…KDSI and VDPR…KFLA. 654–661 contacts ATP; the sequence is GVSGSGKS. Residues 753–779 form a C4-type zinc finger; the sequence is CEACTGDGTIKIEMNFLPDVYVPCEVC.

This sequence belongs to the ABC transporter superfamily. UvrA family. In terms of assembly, forms a heterotetramer with UvrB during the search for lesions.

Its subcellular location is the cytoplasm. The UvrABC repair system catalyzes the recognition and processing of DNA lesions. UvrA is an ATPase and a DNA-binding protein. A damage recognition complex composed of 2 UvrA and 2 UvrB subunits scans DNA for abnormalities. When the presence of a lesion has been verified by UvrB, the UvrA molecules dissociate. The sequence is that of UvrABC system protein A from Mycobacterium bovis (strain ATCC BAA-935 / AF2122/97).